A 337-amino-acid polypeptide reads, in one-letter code: 25S rRNA (adenine(2142)-N(1))-methyltransferase (337 aa).

The S-adenosyl-L-methionine site is built by Gly-180 and Asp-201.

The protein belongs to the BMT2 family.

Its subcellular location is the nucleus. It localises to the nucleolus. The enzyme catalyses adenosine(2142) in 25S rRNA + S-adenosyl-L-methionine = N(1)-methyladenosine(2142) in 25S rRNA + S-adenosyl-L-homocysteine + H(+). In terms of biological role, S-adenosyl-L-methionine-dependent methyltransferase that specifically methylates the N(1) position of adenine 2142 in 25S rRNA. N(1)-methyladenine(2142) in 25S rRNA is present in helix 65, a region that accounts for most of the intersubunit surface of the large subunit. This Saccharomyces cerevisiae (strain ATCC 204508 / S288c) (Baker's yeast) protein is 25S rRNA (adenine(2142)-N(1))-methyltransferase.